Here is a 215-residue protein sequence, read N- to C-terminus: 3-dehydroquinate dehydratase (215 aa).

3-dehydroquinate is bound by residues 27–29 (EVR) and Arg-54. Catalysis depends on His-112, which acts as the Proton donor/acceptor. Lys-139 (schiff-base intermediate with substrate) is an active-site residue. Residues Arg-176 and Gln-198 each contribute to the 3-dehydroquinate site.

The protein belongs to the type-I 3-dehydroquinase family. In terms of assembly, homodimer.

The catalysed reaction is 3-dehydroquinate = 3-dehydroshikimate + H2O. It functions in the pathway metabolic intermediate biosynthesis; chorismate biosynthesis; chorismate from D-erythrose 4-phosphate and phosphoenolpyruvate: step 3/7. Functionally, involved in the third step of the chorismate pathway, which leads to the biosynthesis of aromatic amino acids. Catalyzes the cis-dehydration of 3-dehydroquinate (DHQ) and introduces the first double bond of the aromatic ring to yield 3-dehydroshikimate. The protein is 3-dehydroquinate dehydratase of Thermococcus onnurineus (strain NA1).